The sequence spans 253 residues: 5-oxoprolinase subunit A (253 aa).

It belongs to the LamB/PxpA family. In terms of assembly, forms a complex composed of PxpA, PxpB and PxpC.

The catalysed reaction is 5-oxo-L-proline + ATP + 2 H2O = L-glutamate + ADP + phosphate + H(+). In terms of biological role, catalyzes the cleavage of 5-oxoproline to form L-glutamate coupled to the hydrolysis of ATP to ADP and inorganic phosphate. The polypeptide is 5-oxoprolinase subunit A (Bacillus cereus (strain ATCC 10987 / NRS 248)).